A 206-amino-acid chain; its full sequence is N-(5'-phosphoribosyl)anthranilate isomerase (206 aa).

The protein belongs to the TrpF family.

It carries out the reaction N-(5-phospho-beta-D-ribosyl)anthranilate = 1-(2-carboxyphenylamino)-1-deoxy-D-ribulose 5-phosphate. Its pathway is amino-acid biosynthesis; L-tryptophan biosynthesis; L-tryptophan from chorismate: step 3/5. The protein is N-(5'-phosphoribosyl)anthranilate isomerase of Azotobacter vinelandii (strain DJ / ATCC BAA-1303).